The sequence spans 204 residues: 8-oxoguanine DNA glycosylase/AP lyase (204 aa).

Catalysis depends on residues lysine 128 and aspartate 146.

Belongs to the type-2 OGG1 family.

It catalyses the reaction 2'-deoxyribonucleotide-(2'-deoxyribose 5'-phosphate)-2'-deoxyribonucleotide-DNA = a 3'-end 2'-deoxyribonucleotide-(2,3-dehydro-2,3-deoxyribose 5'-phosphate)-DNA + a 5'-end 5'-phospho-2'-deoxyribonucleoside-DNA + H(+). Functionally, catalyzes the excision of an oxidatively damaged form of guanine (7,8-dihydro-8-oxoguanine = 8-oxoG) from DNA. Also cleaves the DNA backbone at apurinic/apyrimidinic sites (AP sites). The sequence is that of 8-oxoguanine DNA glycosylase/AP lyase from Sulfurisphaera tokodaii (strain DSM 16993 / JCM 10545 / NBRC 100140 / 7) (Sulfolobus tokodaii).